We begin with the raw amino-acid sequence, 102 residues long: uncharacterized protein (102 aa).

The chain crosses the membrane as a helical span at residues 36–55 (IISLLAIFIKMCLWLWKQFL).

The protein localises to the membrane. This is an uncharacterized protein from Homo sapiens (Human).